Reading from the N-terminus, the 495-residue chain is Dipeptide and tripeptide permease B (495 aa).

At 1–16 (MDNKVSILNQPKPFKM) the chain is on the cytoplasmic side. A helical transmembrane segment spans residues 17-37 (IFFIELWERFGYYGLQGILAV). The Periplasmic segment spans residues 38-50 (YFVDKLGFSMQDS). A helical membrane pass occupies residues 51-71 (FVTFGAFAALVYGLVSVGGYV). The Cytoplasmic portion of the chain corresponds to 72 to 80 (GDYVLGTKR). A helical transmembrane segment spans residues 81 to 101 (TMVFGAVVLALGYFLMGFSIL). Topologically, residues 102–104 (NPN) are periplasmic. Residues 105-125 (FIYVALGAIAVGNGLFKANPS) traverse the membrane as a helical segment. Residues 126–144 (SLLAKCYEKGDSRLDGAFT) lie on the Cytoplasmic side of the membrane. A helical transmembrane segment spans residues 145–165 (LYYMSINIGSLVSLSISPVIA). The Periplasmic segment spans residues 166–170 (NNYGY). The helical transmembrane segment at 171–191 (EYAFIICGLGLIASLFSYFSL) threads the bilayer. Residues 192 to 209 (RSTVQGIGSEPDALPLNK) are Cytoplasmic-facing. The helical transmembrane segment at 210-230 (TKALIVLIGTIASTLVCAWLL) threads the bilayer. Residue Q231 is a topological domain, periplasmic. The chain crosses the membrane as a helical span at residues 232 to 252 (NIMMANLALGLIGVGVVGFFL). At 253–265 (KETFKEVGEQRNK) the chain is on the cytoplasmic side. Residues 266–286 (MIVAFILMLQAIIFYVLYAQM) form a helical membrane-spanning segment. Residues 287–309 (PTSLNFFAINNVHSELFGMDINP) lie on the Periplasmic side of the membrane. Residues 310–330 (VSLQALNPFWVIFCSPILAYL) traverse the membrane as a helical segment. Residues 331-348 (YTYYGNQNKDLSMPGKFT) lie on the Cytoplasmic side of the membrane. Residues 349-369 (VGMFMCAFGFLSVAAAGNWFA) form a helical membrane-spanning segment. At 370 to 373 (DQAG) the chain is on the periplasmic side. A helical transmembrane segment spans residues 374–394 (MVSVWWMVLVYLFQSLGELMI). At 395-409 (SGLGLAMVASLVPQR) the chain is on the cytoplasmic side. Residues 410–430 (LMGFTMGAWFLTQAASFIIGG) form a helical membrane-spanning segment. Residues 431–454 (YVATFSATPEHLTDPLDTLPVYTE) lie on the Periplasmic side of the membrane. A helical membrane pass occupies residues 455-475 (LFQNIGFVTLAVAIVMAITAP). Residues 476 to 495 (KLNKMMTSSQPEDAELVEQP) lie on the Cytoplasmic side of the membrane.

It belongs to the major facilitator superfamily. Proton-dependent oligopeptide transporter (POT/PTR) (TC 2.A.17) family. DtpB subfamily.

The protein resides in the cell inner membrane. Its function is as follows. Proton-dependent permease that transports di- and tripeptides. The sequence is that of Dipeptide and tripeptide permease B from Aliivibrio fischeri (strain MJ11) (Vibrio fischeri).